The sequence spans 110 residues: Insulin (110 aa).

The signal sequence occupies residues 1-24; the sequence is MALWMHLLTVLALLALWGPNTGQA. 3 disulfide bridges follow: cysteine 31/cysteine 96, cysteine 43/cysteine 109, and cysteine 95/cysteine 100. Positions 57–87 are cleaved as a propeptide — c peptide; the sequence is ELEDPQVEQTELGMGLGAGGLQPLALEMALQ.

It belongs to the insulin family. Heterodimer of a B chain and an A chain linked by two disulfide bonds.

Its subcellular location is the secreted. Functionally, insulin decreases blood glucose concentration. It increases cell permeability to monosaccharides, amino acids and fatty acids. It accelerates glycolysis, the pentose phosphate cycle, and glycogen synthesis in liver. This chain is Insulin (INS), found in Cavia porcellus (Guinea pig).